The following is a 345-amino-acid chain: Glycerol-3-phosphate dehydrogenase [NAD(P)+] (345 aa).

5 residues coordinate NADPH: Ser-11, Trp-12, His-32, Arg-33, and Lys-106. Sn-glycerol 3-phosphate-binding residues include Lys-106, Gly-137, and Ser-139. Residue Ala-141 participates in NADPH binding. Sn-glycerol 3-phosphate-binding residues include Lys-192, Asp-245, Ser-255, Arg-256, and Asn-257. The active-site Proton acceptor is the Lys-192. Arg-256 contributes to the NADPH binding site. 2 residues coordinate NADPH: Val-280 and Glu-282.

The protein belongs to the NAD-dependent glycerol-3-phosphate dehydrogenase family.

Its subcellular location is the cytoplasm. The catalysed reaction is sn-glycerol 3-phosphate + NAD(+) = dihydroxyacetone phosphate + NADH + H(+). The enzyme catalyses sn-glycerol 3-phosphate + NADP(+) = dihydroxyacetone phosphate + NADPH + H(+). The protein operates within membrane lipid metabolism; glycerophospholipid metabolism. Its function is as follows. Catalyzes the reduction of the glycolytic intermediate dihydroxyacetone phosphate (DHAP) to sn-glycerol 3-phosphate (G3P), the key precursor for phospholipid synthesis. This Bacillus velezensis (strain DSM 23117 / BGSC 10A6 / LMG 26770 / FZB42) (Bacillus amyloliquefaciens subsp. plantarum) protein is Glycerol-3-phosphate dehydrogenase [NAD(P)+].